Reading from the N-terminus, the 97-residue chain is Large ribosomal subunit protein bL27 (97 aa).

Positions 1 to 21 (MAHKKGVGSSRNGRDSNPKYR) are disordered.

This sequence belongs to the bacterial ribosomal protein bL27 family.

The polypeptide is Large ribosomal subunit protein bL27 (Gemmatimonas aurantiaca (strain DSM 14586 / JCM 11422 / NBRC 100505 / T-27)).